A 138-amino-acid chain; its full sequence is Protein FAM136A (138 aa).

This sequence belongs to the FAM136 family.

This is Protein FAM136A (fam136a) from Xenopus tropicalis (Western clawed frog).